Here is an 858-residue protein sequence, read N- to C-terminus: Protein lines (858 aa).

The tract at residues 1 to 102 (MDTSSAAGSG…NSPTTTPCSS (102 aa)) is disordered. Composition is skewed to low complexity over residues 20–30 (STVATSTTSAS) and 65–102 (LDANSNSHLCSSLSSSSSHSLSTPSTANNSPTTTPCSS).

Belongs to the protein lines family. As to quaternary structure, interacts with drm. As to expression, expressed throughout the embryo, including the hindgut, posterior midgut and embryonic epidermis.

It localises to the cytoplasm. The protein resides in the nucleus. Has a dual role as a segment polarity protein and as a modulator of the Abd-B protein. Required for Abd-B to activate the transcription of genes (including ems, cut and sal) that are involved in posterior spiracle morphogenesis. Also required for Abd-B to form an eighth abdominal denticle belt. Acts in a hierarchy downstream of drm and upstream of bowl during foregut and hindgut patterning and morphogenesis. Involved in cell rearrangement during elongation of the embryonic hindgut. Required to regulate expression of embryonic hindgut patterning genes in order to establish the large intestine and at least some rectum, and to repress small intestine fate. Required for late wingless (wg)-dependent cell fate specification in the dorsal embryonic epidermis. Acts in concert with wg to regulate expression of wg itself and also to regulate wg-target genes. May have a role in ventral epidermal patterning, independent of wg signaling. This is Protein lines from Drosophila melanogaster (Fruit fly).